Reading from the N-terminus, the 304-residue chain is Putative AraC-like transcription regulator (304 aa).

Residues A202–H300 form the HTH araC/xylS-type domain. DNA-binding regions (H-T-H motif) lie at residues A219–V240 and L267–L290.

The sequence is that of Putative AraC-like transcription regulator from Streptomyces lividans.